A 701-amino-acid chain; its full sequence is Elongation factor G (701 aa).

The tr-type G domain maps to 8 to 286 (ERIRNIGIIA…AIVHYLPSPV (279 aa)). GTP is bound by residues 17-24 (AHIDAGKT), 85-89 (DTPGH), and 139-142 (NKMD).

The protein belongs to the TRAFAC class translation factor GTPase superfamily. Classic translation factor GTPase family. EF-G/EF-2 subfamily.

The protein localises to the cytoplasm. Its function is as follows. Catalyzes the GTP-dependent ribosomal translocation step during translation elongation. During this step, the ribosome changes from the pre-translocational (PRE) to the post-translocational (POST) state as the newly formed A-site-bound peptidyl-tRNA and P-site-bound deacylated tRNA move to the P and E sites, respectively. Catalyzes the coordinated movement of the two tRNA molecules, the mRNA and conformational changes in the ribosome. The chain is Elongation factor G from Roseiflexus sp. (strain RS-1).